Consider the following 343-residue polypeptide: Methylthioribose-1-phosphate isomerase (343 aa).

Substrate contacts are provided by residues 48–50 (RGA), Arg88, and Gln193. Catalysis depends on Asp234, which acts as the Proton donor. 244-245 (NK) lines the substrate pocket.

The protein belongs to the eIF-2B alpha/beta/delta subunits family. MtnA subfamily.

It carries out the reaction 5-(methylsulfanyl)-alpha-D-ribose 1-phosphate = 5-(methylsulfanyl)-D-ribulose 1-phosphate. The protein operates within amino-acid biosynthesis; L-methionine biosynthesis via salvage pathway; L-methionine from S-methyl-5-thio-alpha-D-ribose 1-phosphate: step 1/6. Catalyzes the interconversion of methylthioribose-1-phosphate (MTR-1-P) into methylthioribulose-1-phosphate (MTRu-1-P). This Thermotoga petrophila (strain ATCC BAA-488 / DSM 13995 / JCM 10881 / RKU-1) protein is Methylthioribose-1-phosphate isomerase.